The following is a 465-amino-acid chain: GTPase Der (465 aa).

EngA-type G domains lie at Pro-3 to Gly-167 and Val-179 to Thr-352. GTP contacts are provided by residues Gly-9–Ser-16, Asp-57–Ile-61, Asn-119–Asp-122, Gly-185–Ser-192, Asp-232–Leu-236, and Asn-297–Asp-300. The 85-residue stretch at His-353–Ala-437 folds into the KH-like domain.

It belongs to the TRAFAC class TrmE-Era-EngA-EngB-Septin-like GTPase superfamily. EngA (Der) GTPase family. Associates with the 50S ribosomal subunit.

In terms of biological role, GTPase that plays an essential role in the late steps of ribosome biogenesis. The chain is GTPase Der from Xanthomonas axonopodis pv. citri (strain 306).